A 642-amino-acid polypeptide reads, in one-letter code: Mini-chromosome maintenance complex-binding protein (642 aa).

Over residues 151 to 161 (ARVSPSTSYTP) the composition is skewed to polar residues. A disordered region spans residues 151 to 196 (ARVSPSTSYTPSRHKRSYEDDEDMDLQPSKQKEQHPGSRQAGGLGG). At S154 the chain carries Phosphoserine. T160 is modified (phosphothreonine). Phosphoserine occurs at positions 167 and 298.

The protein belongs to the MCMBP family. Interacts with the MCM complex: associates with the MCM3-7 complex which lacks MCM2, while it does not interact with the MCM complex when MCM2 is present (MCM2-7 complex). Interacts with the RPA complex, when composed of all RPA1, RPA2 and RPA3 components, but not with RPA1 or RPA2 alone.

The protein resides in the nucleus. Functionally, associated component of the MCM complex that acts as a regulator of DNA replication. Binds to the MCM complex during late S phase and promotes the disassembly of the MCM complex from chromatin, thereby acting as a key regulator of pre-replication complex (pre-RC) unloading from replicated DNA. Can dissociate the MCM complex without addition of ATP; probably acts by destabilizing interactions of each individual subunits of the MCM complex. Required for sister chromatid cohesion. This chain is Mini-chromosome maintenance complex-binding protein (Mcmbp), found in Mus musculus (Mouse).